We begin with the raw amino-acid sequence, 192 residues long: GTP-binding protein RHO2 (192 aa).

Position 14–21 (14–21) interacts with GTP; the sequence is GDGACGKT. Positions 36-44 match the Effector region motif; it reads YHPTVFENY. GTP is bound by residues 61–65 and 119–122; these read DTAGQ and LKKD. Cys-188 carries the S-palmitoyl cysteine lipid modification. A Cysteine methyl ester modification is found at Cys-189. Cys-189 is lipidated: S-geranylgeranyl cysteine. A propeptide spans 190 to 192 (removed in mature form); that stretch reads IIL.

This sequence belongs to the small GTPase superfamily. Rho family. As to quaternary structure, interacts with BEM4.

Its subcellular location is the cell membrane. It catalyses the reaction GTP + H2O = GDP + phosphate + H(+). This Saccharomyces cerevisiae (strain ATCC 204508 / S288c) (Baker's yeast) protein is GTP-binding protein RHO2 (RHO2).